A 278-amino-acid polypeptide reads, in one-letter code: Probable endonuclease 4 (278 aa).

The Zn(2+) site is built by His-66, His-106, Glu-142, Asp-176, His-179, His-213, Asp-226, His-228, and Glu-258.

This sequence belongs to the AP endonuclease 2 family. The cofactor is Zn(2+).

The catalysed reaction is Endonucleolytic cleavage to 5'-phosphooligonucleotide end-products.. Functionally, endonuclease IV plays a role in DNA repair. It cleaves phosphodiester bonds at apurinic or apyrimidinic (AP) sites, generating a 3'-hydroxyl group and a 5'-terminal sugar phosphate. The sequence is that of Probable endonuclease 4 from Halothermothrix orenii (strain H 168 / OCM 544 / DSM 9562).